The primary structure comprises 233 residues: Glutathione S-transferase 2 (233 aa).

The GST N-terminal domain maps to 17–101; it reads QKMIIYDTPA…YIDALDGTPT (85 aa). Residues Tyr-29, His-58, Val-72, 85–86, and His-133 contribute to the glutathione site; that span reads EC. A GST C-terminal domain is found at 106–233; that stretch reads TPLEKGVIHM…KLLEIRSKSS (128 aa).

This sequence belongs to the GST superfamily. Homodimer.

The catalysed reaction is RX + glutathione = an S-substituted glutathione + a halide anion + H(+). This Saccharomyces cerevisiae (strain ATCC 204508 / S288c) (Baker's yeast) protein is Glutathione S-transferase 2 (GTT2).